Here is a 138-residue protein sequence, read N- to C-terminus: Acidic phospholipase A2 daboiatoxin A chain (138 aa).

The first 16 residues, 1–16 (MRTLWIMAVCLIGVEG), serve as a signal peptide directing secretion. Intrachain disulfides connect Cys42/Cys131, Cys44/Cys60, Cys59/Cys111, Cys65/Cys138, Cys66/Cys104, Cys73/Cys97, and Cys91/Cys102. Ca(2+) contacts are provided by Tyr43, Gly45, and Gly47. His63 is a catalytic residue. Residue Asp64 coordinates Ca(2+). Residue Asp105 is part of the active site.

Belongs to the phospholipase A2 family. Group II subfamily. D49 sub-subfamily. As to quaternary structure, heterodimer of A and B chain; non-covalently linked. The acidic protein (B chain) has phospholipase A2 activity and the A chain weakly inhibits the B chain enzymatic activity but potentiates its lethal potency. It depends on Ca(2+) as a cofactor. As to expression, expressed by the venom gland.

The protein resides in the secreted. It carries out the reaction a 1,2-diacyl-sn-glycero-3-phosphocholine + H2O = a 1-acyl-sn-glycero-3-phosphocholine + a fatty acid + H(+). Its function is as follows. Heterodimer (A and B chains): phospholipase A2 that acts as a presynaptic neurotoxin and shows a PLA2 activity of 1377 umol/min/mg. In vivo, induces edema and produces neurotoxic symptoms in mice. Also exhibits indirect hemolysis, a strong myonecrotic activity and cytotoxicity. PLA2 catalyzes the calcium-dependent hydrolysis of the 2-acyl groups in 3-sn-phosphoglycerides. Functionally, monomer: Snake venom phospholipase A2 (PLA2) that shows a PLA2 activity of 578 umol/min/mg. The sequence is that of Acidic phospholipase A2 daboiatoxin A chain from Daboia siamensis (Eastern Russel's viper).